The sequence spans 498 residues: Probable cytosol aminopeptidase (498 aa).

Mn(2+) is bound by residues K263 and D268. K275 is an active-site residue. D286, D345, and E347 together coordinate Mn(2+). R349 is an active-site residue.

The protein belongs to the peptidase M17 family. It depends on Mn(2+) as a cofactor.

The protein resides in the cytoplasm. The enzyme catalyses Release of an N-terminal amino acid, Xaa-|-Yaa-, in which Xaa is preferably Leu, but may be other amino acids including Pro although not Arg or Lys, and Yaa may be Pro. Amino acid amides and methyl esters are also readily hydrolyzed, but rates on arylamides are exceedingly low.. It catalyses the reaction Release of an N-terminal amino acid, preferentially leucine, but not glutamic or aspartic acids.. Its function is as follows. Presumably involved in the processing and regular turnover of intracellular proteins. Catalyzes the removal of unsubstituted N-terminal amino acids from various peptides. The sequence is that of Probable cytosol aminopeptidase from Rhodopseudomonas palustris (strain BisA53).